Here is a 301-residue protein sequence, read N- to C-terminus: GTPase Era (301 aa).

The region spanning Tyr7–Glu175 is the Era-type G domain. Residues Gly15–Ser22 are G1. Gly15–Ser22 provides a ligand contact to GTP. The interval Gln41 to His45 is G2. The tract at residues Asp62–Gly65 is G3. Residues Asp62–Leu66 and Asn124–Asp127 contribute to the GTP site. Residues Asn124–Asp127 are G4. Residues Ile154–Ala156 are G5. In terms of domain architecture, KH type-2 spans Leu206–Ser283.

Belongs to the TRAFAC class TrmE-Era-EngA-EngB-Septin-like GTPase superfamily. Era GTPase family. As to quaternary structure, monomer.

Its subcellular location is the cytoplasm. It localises to the cell inner membrane. Its function is as follows. An essential GTPase that binds both GDP and GTP, with rapid nucleotide exchange. Plays a role in 16S rRNA processing and 30S ribosomal subunit biogenesis and possibly also in cell cycle regulation and energy metabolism. This chain is GTPase Era, found in Salmonella arizonae (strain ATCC BAA-731 / CDC346-86 / RSK2980).